Here is a 1365-residue protein sequence, read N- to C-terminus: DNA-directed RNA polymerase subunit beta' (1365 aa).

Zn(2+) is bound by residues C249, C316, C323, and C326.

The protein belongs to the RNA polymerase beta' chain family. RpoC2 subfamily. In terms of assembly, in cyanobacteria the RNAP catalytic core is composed of 2 alpha, 1 beta, 1 beta', 1 gamma and 1 omega subunit. When a sigma factor is associated with the core the holoenzyme is formed, which can initiate transcription. It depends on Zn(2+) as a cofactor.

The catalysed reaction is RNA(n) + a ribonucleoside 5'-triphosphate = RNA(n+1) + diphosphate. Functionally, DNA-dependent RNA polymerase catalyzes the transcription of DNA into RNA using the four ribonucleoside triphosphates as substrates. The chain is DNA-directed RNA polymerase subunit beta' from Synechococcus sp. (strain CC9311).